Here is a 105-residue protein sequence, read N- to C-terminus: RxLR effector protein PITG_18670 (105 aa).

A signal peptide spans 1-21; the sequence is MRSIFYFALAFAALTCSNASA. The RxLR-dEER motif lies at 39-57; sequence RSLRVAGQEVARGDRGEEI.

This sequence belongs to the RxLR effector family.

It localises to the secreted. It is found in the host nucleus. Its subcellular location is the host nucleolus. The protein resides in the host cytoplasm. Its function is as follows. Effector that enhances P.infestans colonization of Nicotiana benthamiana leaves. This is RxLR effector protein PITG_18670 from Phytophthora infestans (strain T30-4) (Potato late blight agent).